Here is a 479-residue protein sequence, read N- to C-terminus: Signal recognition particle subunit SRP54 1 (479 aa).

The interval 1 to 295 is G-domain; the sequence is MVLAELGGRI…DVKPFVSRLL (295 aa). Residues 108 to 115, 190 to 194, and 248 to 251 each bind GTP; these read GLQGAGKT, DTSGR, and TKMD. Positions 296–479 are M-domain; sequence GKGDWSGLVD…MMGMFGGGGK (184 aa).

This sequence belongs to the GTP-binding SRP family. SRP54 subfamily. Component of a signal recognition particle (SRP) complex that consists of a 7SL RNA molecule of 300 nucleotides and six protein subunits: SRP72, SRP68, SRP54, SRP19, SRP14 and SRP9.

It localises to the cytoplasm. It is found in the endoplasmic reticulum. The catalysed reaction is GTP + H2O = GDP + phosphate + H(+). Its function is as follows. Component of the signal recognition particle (SRP) complex, a ribonucleoprotein complex that mediates the cotranslational targeting of secretory and membrane proteins to the endoplasmic reticulum (ER). As part of the SRP complex, associates with the SRP receptor (SR) component SRPRA to target secretory proteins to the endoplasmic reticulum membrane. Binds to the signal sequence of presecretory proteins when they emerge from the ribosomes. Displays basal GTPase activity, and stimulates reciprocal GTPase activation of the SR subunit SRPRA. Forms a guanosine 5'-triphosphate (GTP)-dependent complex with the SR subunit SRPRA. SR compaction and GTPase mediated rearrangement of SR drive SRP-mediated cotranslational protein translocation into the ER. Requires the presence of SRP9/SRP14 and/or SRP19 to stably interact with RNA. This is Signal recognition particle subunit SRP54 1 (SRP-54A) from Arabidopsis thaliana (Mouse-ear cress).